Consider the following 371-residue polypeptide: Chaperone protein DnaJ (371 aa).

The 65-residue stretch at aspartate 4–glycine 68 folds into the J domain. The CR-type zinc finger occupies glycine 134–glutamine 212. Cysteine 147, cysteine 150, cysteine 164, cysteine 167, cysteine 186, cysteine 189, cysteine 200, and cysteine 203 together coordinate Zn(2+). CXXCXGXG motif repeat units follow at residues cysteine 147 to glycine 154, cysteine 164 to glycine 171, cysteine 186 to glycine 193, and cysteine 200 to glycine 207.

It belongs to the DnaJ family. In terms of assembly, homodimer. Requires Zn(2+) as cofactor.

The protein resides in the cytoplasm. Functionally, participates actively in the response to hyperosmotic and heat shock by preventing the aggregation of stress-denatured proteins and by disaggregating proteins, also in an autonomous, DnaK-independent fashion. Unfolded proteins bind initially to DnaJ; upon interaction with the DnaJ-bound protein, DnaK hydrolyzes its bound ATP, resulting in the formation of a stable complex. GrpE releases ADP from DnaK; ATP binding to DnaK triggers the release of the substrate protein, thus completing the reaction cycle. Several rounds of ATP-dependent interactions between DnaJ, DnaK and GrpE are required for fully efficient folding. Also involved, together with DnaK and GrpE, in the DNA replication of plasmids through activation of initiation proteins. The sequence is that of Chaperone protein DnaJ from Rickettsia felis (strain ATCC VR-1525 / URRWXCal2) (Rickettsia azadi).